An 821-amino-acid chain; its full sequence is Enhancer of polycomb-like protein 1 (821 aa).

Polar residues predominate over residues 1–12; that stretch reads MSSNGGSNTNER. 3 disordered regions span residues 1 to 43, 427 to 485, and 779 to 799; these read MSSN…TRFR, KAAA…QPAM, and QFLQQQQENGSPNNATMPINP. Composition is skewed to low complexity over residues 18–39 and 449–465; these read SGSLRSNSNLSSVNGDGSDSGS and EQAAKVKSSKQKNSSSQ. The span at 786–799 shows a compositional bias: polar residues; the sequence is ENGSPNNATMPINP.

It belongs to the enhancer of polycomb family. In terms of assembly, component of the NuA4 histone acetyltransferase complex.

It localises to the nucleus. Component of the NuA4 histone acetyltransferase complex which is involved in transcriptional activation of selected genes principally by acetylation of nucleosomal histone H4 and H2A. The NuA4 complex is also involved in DNA repair. Involved in gene silencing by neighboring heterochromatin, blockage of the silencing spreading along the chromosome, and required for cell cycle progression through G2/M. This chain is Enhancer of polycomb-like protein 1 (EPL1), found in Candida glabrata (strain ATCC 2001 / BCRC 20586 / JCM 3761 / NBRC 0622 / NRRL Y-65 / CBS 138) (Yeast).